Here is a 152-residue protein sequence, read N- to C-terminus: MFRGVTSISIDNKGRIAIPTRYRAELREQHEGVLVCTVDIRQPCLLLYPLHEWETVEQKLLALSNFDPMQRRIQRVMQGFATECEMDAAGRILLSPTLRQHAQLEQQIMLVGQLNKFEIWQDKQWQSQIAEDLALGGSAEMLNCEALKNLSL.

2 SpoVT-AbrB domains span residues 5–52 and 81–124; these read VTSI…PLHE and ATEC…QDKQ.

The protein belongs to the MraZ family. As to quaternary structure, forms oligomers.

The protein resides in the cytoplasm. The protein localises to the nucleoid. This Actinobacillus pleuropneumoniae serotype 3 (strain JL03) protein is Transcriptional regulator MraZ.